A 296-amino-acid polypeptide reads, in one-letter code: ATP-dependent ribose-1-phosphate kinase (296 aa).

Asp242 acts as the Proton acceptor in catalysis.

It belongs to the carbohydrate kinase PfkB family. Mg(2+) serves as cofactor.

It carries out the reaction alpha-D-ribose 1-phosphate + ATP = alpha-D-ribose 1,5-bisphosphate + ADP + H(+). With respect to regulation, requires salt for kinase activity. 2.0 M is the optimal KCl concentration. Functionally, kinase involved in the non-carboxylating pentose bisphosphate pathway, a nucleoside degradation pathway present in some halophilic archaea. Catalyzes the ATP-dependent phosphorylation of ribose 1-phosphate (R1P) to ribose 1,5-bisphosphate (R15P). Shows weak activity towards various other phosphate acceptors, such as xylulose, 2'-deoxyguanosine and D-ribulose. ATP is the most preferred phosphate donor, followed by CTP and GTP. This chain is ATP-dependent ribose-1-phosphate kinase, found in Halopiger xanaduensis (strain DSM 18323 / JCM 14033 / SH-6).